We begin with the raw amino-acid sequence, 222 residues long: Coiled-coil domain-containing protein 43 homolog (222 aa).

A coiled-coil region spans residues 80–111 (ETENKLKLTNLKLEQELKIKETTQSEINEEEK). 2 disordered regions span residues 102 to 126 (TQSE…EQKK) and 159 to 222 (EDNK…KRRL). Composition is skewed to basic and acidic residues over residues 112 to 126 (YENP…EQKK) and 175 to 212 (RIAD…EEKK). Residues 168 to 222 (GENLNAKRIADEEKAKREKSKIEHQKKVQRDKEALEKQKRDEEKKKTVKKEKRRL) are a coiled coil. Residues 213-222 (KTVKKEKRRL) are compositionally biased toward basic residues.

The protein belongs to the CCDC43 family.

The sequence is that of Coiled-coil domain-containing protein 43 homolog from Dictyostelium discoideum (Social amoeba).